The following is a 77-amino-acid chain: Acyl carrier protein (77 aa).

The Carrier domain maps to 1–76; the sequence is MENFDKVKDI…DAVKFINSIE (76 aa). Serine 36 is modified (O-(pantetheine 4'-phosphoryl)serine).

It belongs to the acyl carrier protein (ACP) family. 4'-phosphopantetheine is transferred from CoA to a specific serine of apo-ACP by AcpS. This modification is essential for activity because fatty acids are bound in thioester linkage to the sulfhydryl of the prosthetic group.

Its subcellular location is the cytoplasm. Its pathway is lipid metabolism; fatty acid biosynthesis. In terms of biological role, carrier of the growing fatty acid chain in fatty acid biosynthesis. In Staphylococcus saprophyticus subsp. saprophyticus (strain ATCC 15305 / DSM 20229 / NCIMB 8711 / NCTC 7292 / S-41), this protein is Acyl carrier protein.